The chain runs to 641 residues: 1-deoxy-D-xylulose-5-phosphate synthase (641 aa).

Thiamine diphosphate contacts are provided by residues His-79 and 120 to 122 (AHS). Asp-151 is a binding site for Mg(2+). Residues 152 to 153 (GS), Asn-180, Tyr-290, and Glu-372 contribute to the thiamine diphosphate site. Asn-180 contributes to the Mg(2+) binding site.

This sequence belongs to the transketolase family. DXPS subfamily. Homodimer. Mg(2+) serves as cofactor. The cofactor is thiamine diphosphate.

It catalyses the reaction D-glyceraldehyde 3-phosphate + pyruvate + H(+) = 1-deoxy-D-xylulose 5-phosphate + CO2. It functions in the pathway metabolic intermediate biosynthesis; 1-deoxy-D-xylulose 5-phosphate biosynthesis; 1-deoxy-D-xylulose 5-phosphate from D-glyceraldehyde 3-phosphate and pyruvate: step 1/1. Functionally, catalyzes the acyloin condensation reaction between C atoms 2 and 3 of pyruvate and glyceraldehyde 3-phosphate to yield 1-deoxy-D-xylulose-5-phosphate (DXP). This Rhodopseudomonas palustris (strain BisB18) protein is 1-deoxy-D-xylulose-5-phosphate synthase.